Here is an 83-residue protein sequence, read N- to C-terminus: MKILIFIIASFMLIGVECKEGYPMGRNGCKIPCAINDNICKTECQAKWKQSDGYCYSPGMSCYCTNLPEDAEVWDFSNIKCRG.

The first 18 residues, 1–18 (MKILIFIIASFMLIGVEC), serve as a signal peptide directing secretion. Positions 19–82 (KEGYPMGRNG…VWDFSNIKCR (64 aa)) constitute an LCN-type CS-alpha/beta domain. Intrachain disulfides connect cysteine 29–cysteine 81, cysteine 33–cysteine 55, cysteine 40–cysteine 62, and cysteine 44–cysteine 64.

The protein belongs to the long (4 C-C) scorpion toxin superfamily. Sodium channel inhibitor family. Beta subfamily. In terms of tissue distribution, expressed by the venom gland.

The protein resides in the secreted. In terms of biological role, beta toxins bind voltage-independently at site-4 of sodium channels (Nav) and shift the voltage of activation toward more negative potentials thereby affecting sodium channel activation and promoting spontaneous and repetitive firing. The sequence is that of Putative beta-neurotoxin RjAa17f from Rhopalurus junceus (Caribbean blue scorpion).